We begin with the raw amino-acid sequence, 272 residues long: MAYTYMTLYMEQEKIVPVYDERGGEKDSVVLPQIFRFPVRKDLIRRAFLSEFTARLQPKGRDPMAGKRTSAVSLGVGRGVARVPRIKGSLRAALVNMARGGRAAHPPRVEKVLKEYINKKEKRLATISAISATSREDLVRQRGHRFSAETLPIVLDSSVLAKISTAREARSLLESVGVYEDVLRAKEGKRYNAGKGKMRGRRYKVPKSVLFVLEDPRSPLALAVKGMPGVDVVTPTLLSVLHLAPGGHPGRLTIYTTEALKLLSRRFEVTLP.

It belongs to the universal ribosomal protein uL4 family. As to quaternary structure, part of the 50S ribosomal subunit.

One of the primary rRNA binding proteins, this protein initially binds near the 5'-end of the 23S rRNA. It is important during the early stages of 50S assembly. It makes multiple contacts with different domains of the 23S rRNA in the assembled 50S subunit and ribosome. Its function is as follows. Forms part of the polypeptide exit tunnel. This chain is Large ribosomal subunit protein uL4, found in Aeropyrum pernix (strain ATCC 700893 / DSM 11879 / JCM 9820 / NBRC 100138 / K1).